Here is a 66-residue protein sequence, read N- to C-terminus: Large ribosomal subunit protein bL33c (66 aa).

The protein belongs to the bacterial ribosomal protein bL33 family.

It is found in the plastid. The protein resides in the chloroplast. The sequence is that of Large ribosomal subunit protein bL33c (rpl33) from Arabidopsis thaliana (Mouse-ear cress).